A 152-amino-acid polypeptide reads, in one-letter code: Probable flagellum biosynthesis repressor protein FlbT (152 aa).

It belongs to the FlbT family.

Functionally, has a post-transcriptional repressor function in flagellum biogenesis. Associates with the 5'-UTR of fljK mRNA and promotes its degradation. The polypeptide is Probable flagellum biosynthesis repressor protein FlbT (Brucella abortus (strain S19)).